A 568-amino-acid polypeptide reads, in one-letter code: Periplasmic trehalase (568 aa).

A signal peptide spans M1 to A39. Residues R169, W176 to D177, N213, R222 to Q224, R294 to E296, and G327 contribute to the substrate site. Active-site proton donor/acceptor residues include D329 and E511. Substrate is bound at residue E526.

It belongs to the glycosyl hydrolase 37 family.

It is found in the periplasm. The enzyme catalyses alpha,alpha-trehalose + H2O = alpha-D-glucose + beta-D-glucose. Its function is as follows. Provides the cells with the ability to utilize trehalose at high osmolarity by splitting it into glucose molecules that can subsequently be taken up by the phosphotransferase-mediated uptake system. This chain is Periplasmic trehalase, found in Xanthomonas oryzae pv. oryzae (strain MAFF 311018).